The sequence spans 258 residues: MRVAVFDCDGFHKKFWSPVVKFPTPLIEGKLIKRYKRFLSDIELPNGDVVVAHCPNTGSMKRCQQDGARVWLSKSDNPKRKLAYTWELVEVDAQYLACINTGYPNKLVGEAISNGVVKELAEYPEQKAEVKYGEKSRIDWLLTGNDGRKCYVEVKSVTLLEEDGLGYFPDAVTDRGRKHLYELAKMVEEGHRAVMFFCVSHTGINSVTPAAHIDKKYAQAFVEVVKKGVEVIAYQVAIDSQEMKVVRSVPVVMPTLLD.

This sequence belongs to the SfsA family.

This is Sugar fermentation stimulation protein homolog from Marinomonas sp. (strain MWYL1).